The following is a 314-amino-acid chain: Ornithine carbamoyltransferase (314 aa).

Residues S58–T61, Q85, R109, and H136–Q139 contribute to the carbamoyl phosphate site. L-ornithine-binding positions include N169, D233, and S237–M238. Carbamoyl phosphate-binding positions include C273–L274 and R301.

The protein belongs to the aspartate/ornithine carbamoyltransferase superfamily. OTCase family.

The protein resides in the cytoplasm. It catalyses the reaction carbamoyl phosphate + L-ornithine = L-citrulline + phosphate + H(+). It participates in amino-acid degradation; L-arginine degradation via ADI pathway; carbamoyl phosphate from L-arginine: step 2/2. Its function is as follows. Reversibly catalyzes the transfer of the carbamoyl group from carbamoyl phosphate (CP) to the N(epsilon) atom of ornithine (ORN) to produce L-citrulline. The protein is Ornithine carbamoyltransferase of Staphylothermus marinus (strain ATCC 43588 / DSM 3639 / JCM 9404 / F1).